Here is a 99-residue protein sequence, read N- to C-terminus: Large ribosomal subunit protein uL23 (99 aa).

Belongs to the universal ribosomal protein uL23 family. In terms of assembly, part of the 50S ribosomal subunit. Contacts protein L29, and trigger factor when it is bound to the ribosome.

In terms of biological role, one of the early assembly proteins it binds 23S rRNA. One of the proteins that surrounds the polypeptide exit tunnel on the outside of the ribosome. Forms the main docking site for trigger factor binding to the ribosome. The polypeptide is Large ribosomal subunit protein uL23 (Francisella tularensis subsp. tularensis (strain SCHU S4 / Schu 4)).